The chain runs to 382 residues: Galactokinase (382 aa).

Glu34–Asp37 is a binding site for substrate. Gly124 to Ser130 is a binding site for ATP. Mg(2+)-binding residues include Ser130 and Glu162. Asp174 serves as the catalytic Proton acceptor. Tyr223 lines the substrate pocket.

It belongs to the GHMP kinase family. GalK subfamily.

The protein localises to the cytoplasm. It carries out the reaction alpha-D-galactose + ATP = alpha-D-galactose 1-phosphate + ADP + H(+). It participates in carbohydrate metabolism; galactose metabolism. Catalyzes the transfer of the gamma-phosphate of ATP to D-galactose to form alpha-D-galactose-1-phosphate (Gal-1-P). This chain is Galactokinase, found in Salmonella newport (strain SL254).